The sequence spans 211 residues: GTP pyrophosphokinase YjbM (211 aa).

Guanosine 3'-diphosphate 5'-triphosphate-binding positions include Lys21–Arg28, Glu41–Phe42, and Arg46–Lys48. ATP contacts are provided by residues Arg46–Lys48, Ser52, Lys56–Arg59, Asp72, and Arg77. Arg59 lines the guanosine 3'-diphosphate 5'-triphosphate pocket. Asp72 is a Mg(2+) binding site. Residues Arg105, Lys112–Ser114, and His120 each bind guanosine 3'-diphosphate 5'-triphosphate. The active-site Proton acceptor is Glu139. Residues Asn148 and Ala151–His155 each bind guanosine 3'-diphosphate 5'-triphosphate.

The protein belongs to the RelA/SpoT family. Homotetramer.

The catalysed reaction is GTP + ATP = guanosine 3'-diphosphate 5'-triphosphate + AMP. It carries out the reaction GDP + ATP = guanosine 3',5'-bis(diphosphate) + AMP. Its pathway is purine metabolism; ppGpp biosynthesis; ppGpp from GTP: step 1/2. Allosterically regulated by its own products; pppGpp simulates synthesis 10-fold more than ppGpp. 2 pppGpp molecules bind in a regulatory cleft in the middle of the tetramer in an asymmetric manner. There is a specific contact of Lys-25 to the gamma-phosphate of pppGpp, explaining why pppGpp stimulates activity but ppGpp does not. Functions as a (p)ppGpp synthase; GDP can be used instead of GTP, resulting in an increase of (p)ppGpp synthesis. The enzyme binds ATP, then GDP or GTP and catalysis is highly cooperative. In eubacteria ppGpp (guanosine 3'-diphosphate 5'-diphosphate) is a mediator of the stringent response that coordinates a variety of cellular activities in response to changes in nutritional abundance. Probably has a minor role in the stringent response. In Bacillus subtilis (strain 168), this protein is GTP pyrophosphokinase YjbM (yjbM).